The sequence spans 205 residues: dTTP/UTP pyrophosphatase (205 aa).

The Proton acceptor role is filled by D71.

This sequence belongs to the Maf family. YhdE subfamily. The cofactor is a divalent metal cation.

The protein resides in the cytoplasm. It carries out the reaction dTTP + H2O = dTMP + diphosphate + H(+). The catalysed reaction is UTP + H2O = UMP + diphosphate + H(+). Its function is as follows. Nucleoside triphosphate pyrophosphatase that hydrolyzes dTTP and UTP. May have a dual role in cell division arrest and in preventing the incorporation of modified nucleotides into cellular nucleic acids. The chain is dTTP/UTP pyrophosphatase from Syntrophus aciditrophicus (strain SB).